The primary structure comprises 231 residues: Lipid A acyltransferase PagP (231 aa).

Positions 1 to 23 are cleaved as a signal peptide; the sequence is MNKLTVRNFIVGLLIVFSLNSFS. The span at 24-43 shows a compositional bias: low complexity; it reads SPPSISNSSSNSIDENSPIN. The interval 24–59 is disordered; sequence SPPSISNSSSNSIDENSPINTFKISPDNQTSKKSDL. Active-site residues include His100, Asp145, and Ser146.

This sequence belongs to the lipid A palmitoyltransferase family. In terms of assembly, homodimer.

It localises to the cell outer membrane. The catalysed reaction is a lipid A + a 1,2-diacyl-sn-glycero-3-phosphocholine = a hepta-acyl lipid A + a 2-acyl-sn-glycero-3-phosphocholine. It catalyses the reaction a lipid IVA + a 1,2-diacyl-sn-glycero-3-phosphocholine = a lipid IVB + a 2-acyl-sn-glycero-3-phosphocholine. It carries out the reaction a lipid IIA + a 1,2-diacyl-sn-glycero-3-phosphocholine = a lipid IIB + a 2-acyl-sn-glycero-3-phosphocholine. Transfers a fatty acid residue from the sn-1 position of a phospholipid to the N-linked hydroxyfatty acid chain on the proximal unit of lipid A or its precursors. This chain is Lipid A acyltransferase PagP, found in Legionella longbeachae serogroup 1 (strain NSW150).